The following is a 173-amino-acid chain: Protein GrpE (173 aa).

It belongs to the GrpE family. Homodimer.

Its subcellular location is the cytoplasm. Participates actively in the response to hyperosmotic and heat shock by preventing the aggregation of stress-denatured proteins, in association with DnaK and GrpE. It is the nucleotide exchange factor for DnaK and may function as a thermosensor. Unfolded proteins bind initially to DnaJ; upon interaction with the DnaJ-bound protein, DnaK hydrolyzes its bound ATP, resulting in the formation of a stable complex. GrpE releases ADP from DnaK; ATP binding to DnaK triggers the release of the substrate protein, thus completing the reaction cycle. Several rounds of ATP-dependent interactions between DnaJ, DnaK and GrpE are required for fully efficient folding. In Campylobacter fetus subsp. fetus (strain 82-40), this protein is Protein GrpE.